The sequence spans 61 residues: Defensin BmKDfsin2 (61 aa).

The first 24 residues, 1–24, serve as a signal peptide directing secretion; the sequence is METIVLLFLLALVFCTLEMGMVEA. 3 disulfides stabilise this stretch: C28-C49, C35-C57, and C39-C59.

The protein belongs to the invertebrate defensin family. Type 2 subfamily. In terms of tissue distribution, highly expressed in non-venom gland (hemolymph) and moderately expressed in venom gland.

It is found in the secreted. In terms of biological role, antibacterial peptide active against Gram-positive bacteria, but not on Gram-negative bacteria. Also has weak blocking activity on Kv1.1/KCNA1, Kv1.2/KCNA2, Kv1.3/KCNA3, KCa3.1/KCNN4/IK, KCa2.3/KCNN3/SK3 and Kv11.1/KCNH2/ERG1 channels (tested at 1 uM). It inhibits potassium channel current by interacting with the pore region. This is Defensin BmKDfsin2 from Olivierus martensii (Manchurian scorpion).